Here is a 301-residue protein sequence, read N- to C-terminus: Probable alpha-L-glutamate ligase (301 aa).

An ATP-grasp domain is found at 104-287 (LQLLSRKGVG…VAALVMEFIE (184 aa)). Residues Lys-141, 178 to 179 (EY), Asp-187, and 211 to 213 (RSN) contribute to the ATP site. Asp-248, Glu-260, and Asn-262 together coordinate Mg(2+). The Mn(2+) site is built by Asp-248, Glu-260, and Asn-262.

Belongs to the RimK family. Requires Mg(2+) as cofactor. Mn(2+) serves as cofactor.

This Saccharophagus degradans (strain 2-40 / ATCC 43961 / DSM 17024) protein is Probable alpha-L-glutamate ligase.